We begin with the raw amino-acid sequence, 124 residues long: Non-structural protein 2 (124 aa).

A DLNP; interaction with MAP1B motif is present at residues 121-124; the sequence is DLNP.

Belongs to the pneumovirus non-structural protein 2 family. As to quaternary structure, monomer (instable). Homomultimer. Heteromultimer with NS1. Interacts with host RIGI (via N-terminus); this interaction prevents host signaling pathway involved in interferon production. Interacts with host MAP1B/microtubule-associated protein 1B.

The protein resides in the host mitochondrion. Its function is as follows. Plays a major role in antagonizing the type I IFN-mediated antiviral response. Acts cooperatively with NS1 to repress activation and nuclear translocation of host IFN-regulatory factor IRF3. Interacts with the host cytoplasmic sensor of viral nucleic acids RIGI and prevents the interaction with its downstream partner MAVS. Together with NS2, participates in the proteasomal degradation of host STAT2, IRF3, IRF7, TBK1 and RIGI through a NS-degradasome involving CUL2 and Elongin-C. The degradasome requires an intact mitochondrial MAVS. Induces host SOCS1 expression. Induces activation of NF-kappa-B. Suppresses premature apoptosis by an NF-kappa-B-dependent, interferon-independent mechanism promoting continued viral replication. This Bos taurus (Bovine) protein is Non-structural protein 2 (1B).